The sequence spans 264 residues: Probable membrane transporter protein HI_0902 (264 aa).

The next 9 membrane-spanning stretches (helical) occupy residues 4 to 24 (FILL…LFGI), 28 to 48 (LVIV…ESLL), 49 to 69 (MSTA…GSAQ), 81 to 101 (AVRI…LFIG), 107 to 127 (ISAK…VLSI), 147 to 167 (ILIG…IVPF), 183 to 203 (AFCG…SGWG), 210 to 230 (YSLG…SFFT), and 243 to 263 (VSTL…NMFL).

The protein belongs to the 4-toluene sulfonate uptake permease (TSUP) (TC 2.A.102) family.

The protein localises to the cell membrane. This is Probable membrane transporter protein HI_0902 from Haemophilus influenzae (strain ATCC 51907 / DSM 11121 / KW20 / Rd).